The sequence spans 150 residues: Large ribosomal subunit protein uL13 (150 aa).

A disordered region spans residues 128–150 (GSDHPHSAQEPKILSLNSESVTK).

The protein belongs to the universal ribosomal protein uL13 family. In terms of assembly, part of the 50S ribosomal subunit.

This protein is one of the early assembly proteins of the 50S ribosomal subunit, although it is not seen to bind rRNA by itself. It is important during the early stages of 50S assembly. This chain is Large ribosomal subunit protein uL13, found in Prochlorococcus marinus (strain NATL1A).